A 148-amino-acid polypeptide reads, in one-letter code: EKC/KEOPS complex subunit Lage3 (148 aa).

The tract at residues 1–21 (MQTAHTGLSHTADGADGQTSR) is disordered.

The protein belongs to the CTAG/PCC1 family. Component of the EKC/KEOPS complex composed of at least GON7, TP53RK, TPRKB, OSGEP and LAGE3; the whole complex dimerizes.

It is found in the cytoplasm. It localises to the nucleus. Component of the EKC/KEOPS complex that is required for the formation of a threonylcarbamoyl group on adenosine at position 37 (t(6)A37) in tRNAs that read codons beginning with adenine. The complex is probably involved in the transfer of the threonylcarbamoyl moiety of threonylcarbamoyl-AMP (TC-AMP) to the N6 group of A37. LAGE3 functions as a dimerization module for the complex. The chain is EKC/KEOPS complex subunit Lage3 from Mus musculus (Mouse).